We begin with the raw amino-acid sequence, 143 residues long: Nucleoside diphosphate kinase (143 aa).

ATP contacts are provided by lysine 10, phenylalanine 58, arginine 86, threonine 92, arginine 103, and asparagine 113. The active-site Pros-phosphohistidine intermediate is the histidine 116.

The protein belongs to the NDK family. As to quaternary structure, homotetramer. The cofactor is Mg(2+).

The protein localises to the cytoplasm. The enzyme catalyses a 2'-deoxyribonucleoside 5'-diphosphate + ATP = a 2'-deoxyribonucleoside 5'-triphosphate + ADP. It carries out the reaction a ribonucleoside 5'-diphosphate + ATP = a ribonucleoside 5'-triphosphate + ADP. Its function is as follows. Major role in the synthesis of nucleoside triphosphates other than ATP. The ATP gamma phosphate is transferred to the NDP beta phosphate via a ping-pong mechanism, using a phosphorylated active-site intermediate. The protein is Nucleoside diphosphate kinase of Ehrlichia ruminantium (strain Welgevonden).